Reading from the N-terminus, the 410-residue chain is DNA primase small subunit (410 aa).

Catalysis depends on residues E43, D106, and D108. Positions 118 to 129 match the Zinc knuckle motif motif; it reads CCKDATVCPKCW.

The protein belongs to the eukaryotic-type primase small subunit family. As to quaternary structure, heterodimer of a small subunit and a large subunit.

DNA primase is the polymerase that synthesizes small RNA primers for the Okazaki fragments made during discontinuous DNA replication. In Caenorhabditis elegans, this protein is DNA primase small subunit (pri-1).